The primary structure comprises 346 residues: uncharacterized protein (346 aa).

The interval 322–346 (GRDGGYRETTSPPTGRGRNVRGSHA) is disordered.

This is an uncharacterized protein from Mycobacterium tuberculosis (strain CDC 1551 / Oshkosh).